Consider the following 42-residue polypeptide: Thymosin beta-10 (42 aa).

2 stretches are compositionally biased toward basic and acidic residues: residues 1–25 (MADK…ETQE) and 33–42 (ETIEQEKQAK). Residues 1 to 42 (MADKPDMGEINSFDKAKLKKTETQEKNTLPTKETIEQEKQAK) form a disordered region. At Ala2 the chain carries N-acetylalanine. Lys4 carries the N6-acetyllysine modification. Ser12 bears the Phosphoserine mark. Lys15 is subject to N6-acetyllysine. 3 positions are modified to phosphothreonine: Thr21, Thr23, and Thr34. Lys39 is modified (N6-acetyllysine).

The protein belongs to the thymosin beta family.

The protein localises to the cytoplasm. It is found in the cytoskeleton. Plays an important role in the organization of the cytoskeleton. Binds to and sequesters actin monomers (G actin) and therefore inhibits actin polymerization. This Sus scrofa (Pig) protein is Thymosin beta-10 (TMSB10).